The following is a 232-amino-acid chain: Pyridoxal 5'-phosphate synthase subunit PdxS (232 aa).

The active-site Schiff-base intermediate with D-ribose 5-phosphate is the lysine 23. Glycine 95 lines the D-ribose 5-phosphate pocket. A D-glyceraldehyde 3-phosphate-binding site is contributed by arginine 107. D-ribose 5-phosphate contacts are provided by residues glycine 156 and 177–178; that span reads GS.

It belongs to the PdxS/SNZ family. As to quaternary structure, in the presence of PdxT, forms a dodecamer of heterodimers.

It catalyses the reaction aldehydo-D-ribose 5-phosphate + D-glyceraldehyde 3-phosphate + L-glutamine = pyridoxal 5'-phosphate + L-glutamate + phosphate + 3 H2O + H(+). It functions in the pathway cofactor biosynthesis; pyridoxal 5'-phosphate biosynthesis. Functionally, catalyzes the formation of pyridoxal 5'-phosphate from ribose 5-phosphate (RBP), glyceraldehyde 3-phosphate (G3P) and ammonia. The ammonia is provided by the PdxT subunit. Can also use ribulose 5-phosphate and dihydroxyacetone phosphate as substrates, resulting from enzyme-catalyzed isomerization of RBP and G3P, respectively. The sequence is that of Pyridoxal 5'-phosphate synthase subunit PdxS from Clostridium novyi.